The sequence spans 1379 residues: DNA-directed RNA polymerase subunit beta (1379 aa).

The protein belongs to the RNA polymerase beta chain family. As to quaternary structure, the RNAP catalytic core consists of 2 alpha, 1 beta, 1 beta' and 1 omega subunit. When a sigma factor is associated with the core the holoenzyme is formed, which can initiate transcription.

It carries out the reaction RNA(n) + a ribonucleoside 5'-triphosphate = RNA(n+1) + diphosphate. DNA-dependent RNA polymerase catalyzes the transcription of DNA into RNA using the four ribonucleoside triphosphates as substrates. In Campylobacter fetus subsp. fetus (strain 82-40), this protein is DNA-directed RNA polymerase subunit beta.